A 100-amino-acid polypeptide reads, in one-letter code: Small ribosomal subunit protein eS24 (100 aa).

This sequence belongs to the eukaryotic ribosomal protein eS24 family.

The polypeptide is Small ribosomal subunit protein eS24 (Methanothermobacter thermautotrophicus (strain ATCC 29096 / DSM 1053 / JCM 10044 / NBRC 100330 / Delta H) (Methanobacterium thermoautotrophicum)).